The following is a 193-amino-acid chain: Orotate phosphoribosyltransferase (193 aa).

Residues R107, K108, K111, H113, and 133-141 (EDVITSGGS) contribute to the 5-phospho-alpha-D-ribose 1-diphosphate site. T137 and R165 together coordinate orotate.

Belongs to the purine/pyrimidine phosphoribosyltransferase family. PyrE subfamily. Homodimer. Mg(2+) serves as cofactor.

It carries out the reaction orotidine 5'-phosphate + diphosphate = orotate + 5-phospho-alpha-D-ribose 1-diphosphate. The protein operates within pyrimidine metabolism; UMP biosynthesis via de novo pathway; UMP from orotate: step 1/2. Functionally, catalyzes the transfer of a ribosyl phosphate group from 5-phosphoribose 1-diphosphate to orotate, leading to the formation of orotidine monophosphate (OMP). The sequence is that of Orotate phosphoribosyltransferase from Rhodopirellula baltica (strain DSM 10527 / NCIMB 13988 / SH1).